Reading from the N-terminus, the 704-residue chain is Cystathionine beta-synthase cbs-1 (704 aa).

Residues asparagine 454, 562 to 566 (GTGGT), and serine 652 each bind pyridoxal 5'-phosphate.

The protein belongs to the cysteine synthase/cystathionine beta-synthase family. In terms of assembly, monomer. As to quaternary structure, does not bind pyridoxal 5'-phosphate, PLP; which may explain why this isoform has virtually undetectable catalytic activity. Pyridoxal 5'-phosphate is required as a cofactor.

It localises to the cytoplasm. The enzyme catalyses L-homocysteine + L-serine = L,L-cystathionine + H2O. Its pathway is amino-acid biosynthesis; L-cysteine biosynthesis; L-cysteine from L-homocysteine and L-serine: step 1/2. In terms of biological role, hydro-lyase catalyzing the first step of the transsulfuration pathway, where the hydroxyl group of L-serine is displaced by L-homocysteine in a beta-replacement reaction to form L-cystathionine, the precursor of L-cysteine. Plays a role in maintaining homocysteine homeostasis. Involved in cold-induced somatic longevity mediated by prostaglandin E2 (PGE2) signals from adult germ cells, perhaps acting via a role in the production of hydrogen sulfide (H2S). Required for normal development. This is Cystathionine beta-synthase cbs-1 from Caenorhabditis elegans.